Here is a 393-residue protein sequence, read N- to C-terminus: Formate-dependent phosphoribosylglycinamide formyltransferase (393 aa).

N(1)-(5-phospho-beta-D-ribosyl)glycinamide-binding positions include glutamate 15–leucine 16 and glutamate 75. Residues arginine 107, lysine 148, serine 153–glutamine 158, glutamate 188–isoleucine 191, and glutamate 196 each bind ATP. Residues asparagine 112–leucine 302 form the ATP-grasp domain. Residues glutamate 261 and glutamate 273 each contribute to the Mg(2+) site. N(1)-(5-phospho-beta-D-ribosyl)glycinamide contacts are provided by residues aspartate 280, lysine 350, and arginine 357–arginine 358.

The protein belongs to the PurK/PurT family. In terms of assembly, homodimer.

The enzyme catalyses N(1)-(5-phospho-beta-D-ribosyl)glycinamide + formate + ATP = N(2)-formyl-N(1)-(5-phospho-beta-D-ribosyl)glycinamide + ADP + phosphate + H(+). Its pathway is purine metabolism; IMP biosynthesis via de novo pathway; N(2)-formyl-N(1)-(5-phospho-D-ribosyl)glycinamide from N(1)-(5-phospho-D-ribosyl)glycinamide (formate route): step 1/1. Its function is as follows. Involved in the de novo purine biosynthesis. Catalyzes the transfer of formate to 5-phospho-ribosyl-glycinamide (GAR), producing 5-phospho-ribosyl-N-formylglycinamide (FGAR). Formate is provided by PurU via hydrolysis of 10-formyl-tetrahydrofolate. In Prochlorococcus marinus (strain SARG / CCMP1375 / SS120), this protein is Formate-dependent phosphoribosylglycinamide formyltransferase.